A 266-amino-acid chain; its full sequence is 3',5'-cyclic-nucleotide phosphodiesterase alr5338 (266 aa).

7 residues coordinate Fe cation: aspartate 14, histidine 16, aspartate 56, asparagine 86, histidine 155, histidine 194, and histidine 196. Residues histidine 16, aspartate 56, and 86–87 (NH) contribute to the AMP site. Position 196 (histidine 196) interacts with AMP.

This sequence belongs to the cyclic nucleotide phosphodiesterase class-III family. Requires Fe(2+) as cofactor. The cofactor is Mn(2+).

It carries out the reaction a nucleoside 3',5'-cyclic phosphate + H2O = a nucleoside 5'-phosphate + H(+). The enzyme catalyses 3',5'-cyclic AMP + H2O = AMP + H(+). It catalyses the reaction 3',5'-cyclic GMP + H2O = GMP + H(+). Its activity is regulated as follows. Activated by iron and manganese. Functionally, hydrolyzes cAMP to 5'-AMP. Plays an important regulatory role in modulating the intracellular concentration of cAMP, thereby influencing cAMP-dependent processes. Can also hydrolyze cGMP. In Nostoc sp. (strain PCC 7120 / SAG 25.82 / UTEX 2576), this protein is 3',5'-cyclic-nucleotide phosphodiesterase alr5338.